The following is a 1117-amino-acid chain: DNA polymerase (1117 aa).

The tract at residues 591 to 621 (ESSPVASFEEDSEQTSDSSLGEVSSQGSSDG) is disordered. The segment covering 606-618 (SDSSLGEVSSQGS) has biased composition (low complexity).

Belongs to the DNA polymerase type-B family.

The protein localises to the host nucleus. The catalysed reaction is DNA(n) + a 2'-deoxyribonucleoside 5'-triphosphate = DNA(n+1) + diphosphate. In Cavia porcellus (Guinea pig), this protein is DNA polymerase.